The sequence spans 142 residues: MLSPRRTKFRKQQRGRMTGKATRGNTLAFGNFGLQALECSWITARQIEASRRAMTRYTRRGGKIWIRIFPDKPITMRPAETRMGSGKGNPEFWVAVVKPGRVLFEIGGEVAEETAREAMRLASHKLPIKTKFITRDSEAQEA.

Over residues 1-14 (MLSPRRTKFRKQQR) the composition is skewed to basic residues. Residues 1 to 22 (MLSPRRTKFRKQQRGRMTGKAT) are disordered.

Belongs to the universal ribosomal protein uL16 family. In terms of assembly, part of the 50S ribosomal subunit.

Binds 23S rRNA and is also seen to make contacts with the A and possibly P site tRNAs. The protein is Large ribosomal subunit protein uL16 of Synechococcus elongatus (strain ATCC 33912 / PCC 7942 / FACHB-805) (Anacystis nidulans R2).